A 192-amino-acid chain; its full sequence is U1 small nuclear ribonucleoprotein C (192 aa).

The segment at 4–36 (YYCEYCDIYLTHSSPVGRRQHNQGRKHISAKIE) adopts a Matrin-type zinc-finger fold. The interval 118-192 (PGANKYPNNN…FVNKNSEQPN (75 aa)) is disordered. Over residues 133-154 (RISNTPKPYNNYTNKPITNSPY) the composition is skewed to polar residues. Residues 164 to 173 (NNENSNNFSN) are compositionally biased toward low complexity. Polar residues predominate over residues 174-192 (YQMNKDNSNFVNKNSEQPN).

The protein belongs to the U1 small nuclear ribonucleoprotein C family. U1 snRNP is composed of the 7 core Sm proteins B/B', D1, D2, D3, E, F and G that assemble in a heptameric protein ring on the Sm site of the small nuclear RNA to form the core snRNP, and at least 3 U1 snRNP-specific proteins U1-70K, U1-A and U1-C. U1-C interacts with U1 snRNA and the 5' splice-site region of the pre-mRNA.

The protein localises to the nucleus. In terms of biological role, component of the spliceosomal U1 snRNP, which is essential for recognition of the pre-mRNA 5' splice-site and the subsequent assembly of the spliceosome. U1-C is directly involved in initial 5' splice-site recognition for both constitutive and regulated alternative splicing. The interaction with the 5' splice-site seems to precede base-pairing between the pre-mRNA and the U1 snRNA. Stimulates commitment or early (E) complex formation by stabilizing the base pairing of the 5' end of the U1 snRNA and the 5' splice-site region. In Plasmodium chabaudi chabaudi, this protein is U1 small nuclear ribonucleoprotein C.